Consider the following 284-residue polypeptide: D-tagatose-1,6-bisphosphate aldolase subunit GatY (284 aa).

Residue D82 is the Proton donor of the active site. Residues H83 and H180 each coordinate Zn(2+). Residue G181 coordinates dihydroxyacetone phosphate. Position 208 (H208) interacts with Zn(2+). Dihydroxyacetone phosphate-binding positions include 209-211 (GAS) and 230-233 (NVAT).

This sequence belongs to the class II fructose-bisphosphate aldolase family. TagBP aldolase GatY subfamily. In terms of assembly, forms a complex with GatZ. The cofactor is Zn(2+).

The enzyme catalyses D-tagatofuranose 1,6-bisphosphate = D-glyceraldehyde 3-phosphate + dihydroxyacetone phosphate. The protein operates within carbohydrate metabolism; D-tagatose 6-phosphate degradation; D-glyceraldehyde 3-phosphate and glycerone phosphate from D-tagatose 6-phosphate: step 2/2. Functionally, catalytic subunit of the tagatose-1,6-bisphosphate aldolase GatYZ, which catalyzes the reversible aldol condensation of dihydroxyacetone phosphate (DHAP or glycerone-phosphate) with glyceraldehyde 3-phosphate (G3P) to produce tagatose 1,6-bisphosphate (TBP). Requires GatZ subunit for full activity and stability. Is involved in the catabolism of galactitol. The polypeptide is D-tagatose-1,6-bisphosphate aldolase subunit GatY (Escherichia coli O139:H28 (strain E24377A / ETEC)).